The sequence spans 230 residues: Lipopolysaccharide core heptose(II) kinase WaaY (230 aa).

This sequence belongs to the protein kinase superfamily. RfaY/WaaY family.

It carries out the reaction alpha-D-Glc-(1-&gt;3)-[L-alpha-D-Hep-(1-&gt;7)]-L-alpha-D-Hep-(1-&gt;3)-4-O-PO3(2-)-L-alpha-D-Hep-(1-&gt;5)-[alpha-Kdo-(2-&gt;4)]-alpha-Kdo-(2-&gt;6)-lipid A + ATP = alpha-D-Glc-(1-&gt;3)-[L-alpha-D-Hep-(1-&gt;7)]-4-O-PO3(2-)-L-alpha-D-Hep-(1-&gt;3)-4-O-PO3(2-)-L-alpha-D-Hep-(1-&gt;5)-[alpha-Kdo-(2-&gt;4)]-alpha-Kdo-(2-&gt;6)-lipid A + ADP + H(+). It functions in the pathway bacterial outer membrane biogenesis; LPS core biosynthesis. Functionally, kinase involved in the biosynthesis of the core oligosaccharide region of lipopolysaccharide (LPS). Catalyzes the phosphorylation of the second heptose unit (HepII) of the inner core. The protein is Lipopolysaccharide core heptose(II) kinase WaaY of Escherichia coli.